Here is a 169-residue protein sequence, read N- to C-terminus: Large ribosomal subunit protein uL18 (169 aa).

The protein belongs to the universal ribosomal protein uL18 family. Part of the 50S ribosomal subunit. Contacts the 5S and 23S rRNAs.

This is one of the proteins that bind and probably mediate the attachment of the 5S RNA into the large ribosomal subunit, where it forms part of the central protuberance. In Methanothrix thermoacetophila (strain DSM 6194 / JCM 14653 / NBRC 101360 / PT) (Methanosaeta thermophila), this protein is Large ribosomal subunit protein uL18.